A 583-amino-acid chain; its full sequence is MERSMYAGRVRSEHIGTTITLKGWVSRRRNLGGLIFIDLRDREGLMQLVVNPENADAAVVETAESLRSEFVIEVTGTVEAREQANDNLPTGAVELKVEDLKVLNTAKTTPFEIKDGVEASDDTRMRYRYLDLRRPEMLENFKLRAKVTHTIRNYLDDLEFIDVETPMLTKSTPEGARDYLVPSRVSQGHFYALPQSPQITKQLLMNAGFDRYYQIVKCFRDEDLRGDRQPEFTQVDLETSFLNEQEIQDITEGLIAKVMKETKGVEVTLPFPRMSYDDAMNNYGSDKPDTRFDMLLQDLTELVKDIDFKVFAEAPAVKAIVVKGNADKYSRKSIDKLTDFAKQFGAKGLAWVKMTDGVLAGPVAKFLTSIEEKLTDTLQIEENDLVLFVADTLEIANNTLGALRNQIAKELDMIDNTKFNFLWVVDWPMFEWSEEEGRYMSAHHPFTLPTEDSAAELEGDLSKVRAVAYDIVLNGYELGGGSLRINQKDLQERMLKALGFSEESAYEQFGFLLEAMDYGFPPHGGLALGLDRFVMLLAGKDNIREVIAFPKNNKASDPMTQAPSLVADKQLEELALHVELENE.

Position 174 (Glu-174) interacts with L-aspartate. An aspartate region spans residues 198 to 201 (QITK). Residue Arg-220 participates in L-aspartate binding. ATP is bound by residues 220–222 (RDE) and Gln-229. L-aspartate is bound at residue His-443. Glu-477 lines the ATP pocket. Residue Arg-484 coordinates L-aspartate. 529–532 (GLDR) contributes to the ATP binding site.

Belongs to the class-II aminoacyl-tRNA synthetase family. Type 1 subfamily. Homodimer.

It is found in the cytoplasm. It catalyses the reaction tRNA(Asp) + L-aspartate + ATP = L-aspartyl-tRNA(Asp) + AMP + diphosphate. Catalyzes the attachment of L-aspartate to tRNA(Asp) in a two-step reaction: L-aspartate is first activated by ATP to form Asp-AMP and then transferred to the acceptor end of tRNA(Asp). This Streptococcus thermophilus (strain CNRZ 1066) protein is Aspartate--tRNA ligase.